Reading from the N-terminus, the 937-residue chain is Translation initiation factor IF-2 (937 aa).

The tract at residues 47–352 (RAAFQTKATP…EMPQRKERPL (306 aa)) is disordered. Residues 52–68 (TKATPAASKPATPAAPK) show a composition bias toward low complexity. The span at 97 to 116 (QHSNNRPQANANRNGQASNG) shows a compositional bias: polar residues. Positions 117–153 (QNRTNNARPNNNSARPNNSRPNTNSRPNNNSQNRSTS) are enriched in low complexity. Polar residues predominate over residues 154-169 (ANHPMSLQEQISQANA). Basic and acidic residues predominate over residues 173–197 (RTQERIQQQREQREADEKKRREQAN). The span at 202–229 (TRNNASNNRPSNGKPTNGARPTTNSPRP) shows a compositional bias: polar residues. Residues 240-269 (SSRPNNNNSARPNTTNNRPTNSRPATTPSR) are compositionally biased toward low complexity. Residues 274–298 (QEMQQKMQANTVSASKPASNNTASK) show a composition bias toward polar residues. The segment covering 322 to 331 (FNKKRKKTRK) has biased composition (basic residues). A compositionally biased stretch (basic and acidic residues) spans 339–352 (AAKKEMPQRKERPL). A tr-type G domain is found at 438–607 (SRPPVVTIMG…LLEADVLELK (170 aa)). Residues 447–454 (GHVDHGKT) form a G1 region. 447–454 (GHVDHGKT) is a GTP binding site. The G2 stretch occupies residues 472 to 476 (GITQH). Residues 493–496 (DTPG) are G3. GTP-binding positions include 493-497 (DTPGH) and 547-550 (NKID). The tract at residues 547 to 550 (NKID) is G4. Residues 583–585 (SAK) are G5.

It belongs to the TRAFAC class translation factor GTPase superfamily. Classic translation factor GTPase family. IF-2 subfamily.

The protein resides in the cytoplasm. In terms of biological role, one of the essential components for the initiation of protein synthesis. Protects formylmethionyl-tRNA from spontaneous hydrolysis and promotes its binding to the 30S ribosomal subunits. Also involved in the hydrolysis of GTP during the formation of the 70S ribosomal complex. The chain is Translation initiation factor IF-2 from Latilactobacillus sakei subsp. sakei (strain 23K) (Lactobacillus sakei subsp. sakei).